The following is a 1156-amino-acid chain: Condensin-2 complex subunit G2 (1156 aa).

Residues 460 to 498 (MLPALKFCLHDNSEKVRVAFVDMLLKIKAVRAAKFWKIC) form an HEAT repeat. Residues 587 to 611 (PNEDTEDEDDDEGDGEGIVRGDSEK) are disordered. The span at 589–601 (EDTEDEDDDEGDG) shows a compositional bias: acidic residues.

Component of the condensin-2 complex, which contains the smc2 and smc4 heterodimer, and three non SMC subunits that probably regulate the complex: ncaph2, ncapd3 and ncapg2.

It localises to the nucleus. Its function is as follows. Regulatory subunit of the condensin-2 complex, a complex which establishes mitotic chromosome architecture and is involved in physical rigidity of the chromatid axis. The protein is Condensin-2 complex subunit G2 (ncapg2) of Xenopus laevis (African clawed frog).